The primary structure comprises 197 residues: Protein GrpE (197 aa).

Basic and acidic residues predominate over residues 1-27; the sequence is MSNKEQHIEKEEQLQEEKHEEQQKTEE. Residues 1–34 form a disordered region; the sequence is MSNKEQHIEKEEQLQEEKHEEQQKTEETEVEAVN.

The protein belongs to the GrpE family. As to quaternary structure, homodimer.

The protein resides in the cytoplasm. Participates actively in the response to hyperosmotic and heat shock by preventing the aggregation of stress-denatured proteins, in association with DnaK and GrpE. It is the nucleotide exchange factor for DnaK and may function as a thermosensor. Unfolded proteins bind initially to DnaJ; upon interaction with the DnaJ-bound protein, DnaK hydrolyzes its bound ATP, resulting in the formation of a stable complex. GrpE releases ADP from DnaK; ATP binding to DnaK triggers the release of the substrate protein, thus completing the reaction cycle. Several rounds of ATP-dependent interactions between DnaJ, DnaK and GrpE are required for fully efficient folding. This Pasteurella multocida (strain Pm70) protein is Protein GrpE.